Consider the following 839-residue polypeptide: Thymine dioxygenase JBP1 (839 aa).

Positions Lys86–Ala288 are thymine dioxygenase. Residues His213, Asp215, and His263 each contribute to the Fe cation site. Arg279 lines the 2-oxoglutarate pocket. The interval Lys415 to Pro583 is DNA-binding JBP1 domain.

It belongs to the TET family. JBP1 subfamily. As to quaternary structure, monomer. Binds to DNA as a monomer. Fe(2+) serves as cofactor.

It localises to the nucleus. The enzyme catalyses thymine + 2-oxoglutarate + O2 = 5-hydroxymethyluracil + succinate + CO2. Dioxygenase that catalyzes the first step of DNA base J (beta-d-glucosyl-HOMedU) biosynthesis by converting thymine to 5-hydroxymethyluracil (HOMedU). DNA base J is a hypermodified thymidine residue found in the genome of kinetoplastid parasites, which is localized primarily to repetitive DNA, namely the telomeres, and is implicated in the regulation of antigenic variation. Also specifically binds to base J-containing DNA (J-DNA). Involved in propagation and maintenance of DNA base J synthesis initiated by JBP2 by specifically binding already synthesized DNA base J and propagating J synthesis. Thymine dioxygenase activity and J-DNA-binding are independent functions. This chain is Thymine dioxygenase JBP1 (JBP1), found in Trypanosoma brucei brucei (strain 927/4 GUTat10.1).